The sequence spans 303 residues: Diacylglycerol kinase (303 aa).

Residues 1 to 132 enclose the DAGKc domain; the sequence is MKRARIIYNP…IDIGQVNGQY (132 aa). Residues 9-13, T40, 66-72, and T93 contribute to the ATP site; these read NPTSG and GDGTINE. 3 residues coordinate Mg(2+): S213, D216, and M218. Catalysis depends on E273, which acts as the Proton acceptor.

It belongs to the diacylglycerol/lipid kinase family. Requires Mg(2+) as cofactor.

It carries out the reaction a 1,2-diacyl-sn-glycerol + ATP = a 1,2-diacyl-sn-glycero-3-phosphate + ADP + H(+). It catalyses the reaction 1,2-di-(9Z-octadecenoyl)-sn-glycerol + ATP = 1,2-di-(9Z-octadecenoyl)-sn-glycero-3-phosphate + ADP + H(+). Its function is as follows. Catalyzes the phosphorylation of diacylglycerol (DAG) into phosphatidic acid. Is a key enzyme involved in the production of lipoteichoic acid by reintroducing DAG formed from the breakdown of membrane phospholipids into the phosphatidylglycerol biosynthetic pathway. Is more active toward long-chain DAG compared with short-chain DAG. Is not able to phosphorylate substrates other than DAG, such as monoacylglycerol, ceramide, undecaprenol, phosphatidylinositol, or sphingosine. The protein is Diacylglycerol kinase (dagK) of Bacillus subtilis (strain 168).